The chain runs to 569 residues: Neutral leucine aminopeptidase, chloroplastic (569 aa).

The N-terminal 48 residues, 1–48, are a transit peptide targeting the chloroplast; the sequence is MNGVLCSSSSSFHSYPSIFTKFQSSPIWSFSISVTPLCSRRAKRMAHS. Positions 339 and 344 each coordinate Mn(2+). The active site involves K351. Mn(2+)-binding residues include D364, D424, and E426. Residue R428 is part of the active site.

Belongs to the peptidase M17 family. In terms of assembly, homohexamer (dimer of homotrimers). Mn(2+) serves as cofactor. Expressed constitutively at low levels. Expressed in vegetative and reproductive organs, including leaves, stems, roots, cotyledons (after imbibition), pistils, sepals, petals, stamens, and floral buds (at protein level). Present at very low levels in healthy leaves.

The protein localises to the plastid. Its subcellular location is the chloroplast. The enzyme catalyses Release of an N-terminal amino acid, Xaa-|-Yaa-, in which Xaa is preferably Leu, but may be other amino acids including Pro although not Arg or Lys, and Yaa may be Pro. Amino acid amides and methyl esters are also readily hydrolyzed, but rates on arylamides are exceedingly low.. The catalysed reaction is Release of N-terminal proline from a peptide.. Its function is as follows. Catalyzes the removal of unsubstituted N-terminal amino acids from various peptides. When associated as homohexamer, catalyzes the proteolyzes of Xaa-Leu dipeptides. Possesses leucine aminopeptidase activity against the model substrate leucine-amido methyl coumarin. Presumably involved in the processing and regular turnover of intracellular proteins. Functionally, functions as a molecular chaperone to protect proteins from heat-induced damage. The sequence is that of Neutral leucine aminopeptidase, chloroplastic from Solanum lycopersicum (Tomato).